Here is a 62-residue protein sequence, read N- to C-terminus: UPF0370 protein plu2724 (62 aa).

The helical transmembrane segment at 3 to 23 (WLADYWWIILILLVGVLLNAI) threads the bilayer. The interval 36 to 62 (DNKPELPPHRDLNSKWDDEDDWPQKKP) is disordered.

The protein belongs to the UPF0370 family.

The protein resides in the cell membrane. In Photorhabdus laumondii subsp. laumondii (strain DSM 15139 / CIP 105565 / TT01) (Photorhabdus luminescens subsp. laumondii), this protein is UPF0370 protein plu2724.